The sequence spans 389 residues: tRNA-specific 2-thiouridylase MnmA (389 aa).

Residues 21–28 (AMSGGVDS) and L47 contribute to the ATP site. The active-site Nucleophile is C115. C115 and C212 are disulfide-bonded. Residue G139 coordinates ATP. The interval 162–164 (RDQ) is interaction with tRNA. C212 acts as the Cysteine persulfide intermediate in catalysis.

It belongs to the MnmA/TRMU family.

Its subcellular location is the cytoplasm. It catalyses the reaction S-sulfanyl-L-cysteinyl-[protein] + uridine(34) in tRNA + AH2 + ATP = 2-thiouridine(34) in tRNA + L-cysteinyl-[protein] + A + AMP + diphosphate + H(+). Functionally, catalyzes the 2-thiolation of uridine at the wobble position (U34) of tRNA, leading to the formation of s(2)U34. The protein is tRNA-specific 2-thiouridylase MnmA of Xanthobacter autotrophicus (strain ATCC BAA-1158 / Py2).